We begin with the raw amino-acid sequence, 309 residues long: Metal ABC transporter substrate-binding lipoprotein SsaB (309 aa).

A signal peptide spans 1-19 (MKKLGFLSLLLLAVCTLFA). Cys-20 carries N-palmitoyl cysteine lipidation. The S-diacylglycerol cysteine moiety is linked to residue Cys-20. The a divalent metal cation site is built by His-67, His-139, Glu-205, and Asp-280.

Belongs to the bacterial solute-binding protein 9 family. Lipoprotein receptor antigen (Lrai) subfamily. Homodimer and homotrimer.

It localises to the cell membrane. Functionally, part of an ATP-binding cassette (ABC) transport system involved in metal import. Binds a metal with high affinity and specificity and delivers it to the membrane permease for translocation into the cytoplasm. Also acts as an adhesin which is involved on adherence to extracellular matrix. It is an important factor in the pathogenesis and infection. May contribute to the formation and accumulation of dental plaque. In Streptococcus sanguinis, this protein is Metal ABC transporter substrate-binding lipoprotein SsaB (ssaB).